Reading from the N-terminus, the 844-residue chain is Protein translocase subunit SecA (844 aa).

Residues Gln89, 107–111 (GEGKT), and Asp497 each bind ATP. Residues Cys829, Cys831, Cys840, and His841 each contribute to the Zn(2+) site.

Belongs to the SecA family. As to quaternary structure, monomer and homodimer. Part of the essential Sec protein translocation apparatus which comprises SecA, SecYEG and auxiliary proteins SecDF. Other proteins may also be involved. It depends on Zn(2+) as a cofactor.

The protein localises to the cell membrane. It localises to the cytoplasm. It catalyses the reaction ATP + H2O + cellular proteinSide 1 = ADP + phosphate + cellular proteinSide 2.. Functionally, part of the Sec protein translocase complex. Interacts with the SecYEG preprotein conducting channel. Has a central role in coupling the hydrolysis of ATP to the transfer of proteins into and across the cell membrane, serving as an ATP-driven molecular motor driving the stepwise translocation of polypeptide chains across the membrane. In Streptococcus suis (strain 98HAH33), this protein is Protein translocase subunit SecA.